A 260-amino-acid chain; its full sequence is tRNA pseudouridine synthase A (260 aa).

Aspartate 60 acts as the Nucleophile in catalysis. Tyrosine 118 contributes to the substrate binding site.

Belongs to the tRNA pseudouridine synthase TruA family. In terms of assembly, homodimer.

The enzyme catalyses uridine(38/39/40) in tRNA = pseudouridine(38/39/40) in tRNA. In terms of biological role, formation of pseudouridine at positions 38, 39 and 40 in the anticodon stem and loop of transfer RNAs. This is tRNA pseudouridine synthase A from Leuconostoc citreum (strain KM20).